The sequence spans 153 residues: Large ribosomal subunit protein uL30 (153 aa).

It belongs to the universal ribosomal protein uL30 family. As to quaternary structure, part of the 50S ribosomal subunit.

The sequence is that of Large ribosomal subunit protein uL30 from Methanospirillum hungatei JF-1 (strain ATCC 27890 / DSM 864 / NBRC 100397 / JF-1).